We begin with the raw amino-acid sequence, 126 residues long: Fluoride-specific ion channel FluC 2 (126 aa).

4 helical membrane-spanning segments follow: residues 11–31 (VLLI…ICEH), 36–56 (LGIL…MYDA), 69–89 (AFGT…VQSF), and 93–113 (FLPA…GVFF). Glycine 76 and threonine 79 together coordinate Na(+).

It belongs to the fluoride channel Fluc/FEX (TC 1.A.43) family.

It localises to the cell membrane. The catalysed reaction is fluoride(in) = fluoride(out). With respect to regulation, na(+) is not transported, but it plays an essential structural role and its presence is essential for fluoride channel function. Fluoride-specific ion channel. Important for reducing fluoride concentration in the cell, thus reducing its toxicity. This chain is Fluoride-specific ion channel FluC 2, found in Methanosarcina mazei (strain ATCC BAA-159 / DSM 3647 / Goe1 / Go1 / JCM 11833 / OCM 88) (Methanosarcina frisia).